We begin with the raw amino-acid sequence, 246 residues long: MVTMKDLLECGVHFGHQTRRWNPKTKKFIFGVRKNIHIIDLQKTLRYFRYTYNIVRDASAQGKSIMFVGTKKQANETLKEFAESIQVPYVNYRWLGGMLTNFSTIRKSVRKLEIIEEMENSGQIDLLTKKEKLMILRKKEKLDKYLGGVRHMKKIPDMIFVIDVAKEKIAVAEARKLHIPIVAPLDTNCDPDLVDYPIPGNDDAIRSIRLFCKEMSEAILEGRELMQEEIVHADENSEEIEFVSNE.

Belongs to the universal ribosomal protein uS2 family.

The chain is Small ribosomal subunit protein uS2 from Helicobacter acinonychis (strain Sheeba).